The sequence spans 460 residues: Cyclin-T1-2 (460 aa).

Disordered regions lie at residues 1–20 (MDEALNENASGSESDASSVA) and 285–345 (QPIS…QDHS). Residues 314-324 (SDDHSVHDGSR) show a composition bias toward basic and acidic residues. Over residues 332 to 345 (NSESEAQKNLQDHS) the composition is skewed to polar residues.

Belongs to the cyclin family. Cyclin T subfamily.

The chain is Cyclin-T1-2 (CYCT1-2) from Arabidopsis thaliana (Mouse-ear cress).